The chain runs to 424 residues: Zinc metalloproteinase-disintegrin-like brevilysin H2b (424 aa).

Gln-1 bears the Pyrrolidone carboxylic acid mark. Residues 9 to 207 enclose the Peptidase M12B domain; the sequence is RYVKLAIVAD…YKPQCILNEP (199 aa). Asn-69 carries N-linked (GlcNAc...) asparagine glycosylation. Ca(2+) is bound at residue Asp-96. 3 disulfides stabilise this stretch: Cys-120-Cys-202, Cys-164-Cys-186, and Cys-166-Cys-169. Residue His-145 coordinates Zn(2+). Residue Glu-146 is part of the active site. The Zn(2+) site is built by His-149 and His-155. Asn-185 is a glycosylation site (N-linked (GlcNAc...) asparagine). 8 residues coordinate Ca(2+): Cys-202, Asn-205, Val-217, Asn-220, Leu-222, Glu-224, Glu-227, and Asp-230. Positions 215–301 constitute a Disintegrin domain; it reads PPVCGNELLE…DCPTDDLQRN (87 aa). 14 disulfides stabilise this stretch: Cys-218/Cys-247, Cys-229/Cys-242, Cys-231/Cys-237, Cys-241/Cys-264, Cys-255/Cys-261, Cys-260/Cys-286, Cys-273/Cys-293, Cys-280/Cys-312, Cys-305/Cys-317, Cys-324/Cys-374, Cys-339/Cys-385, Cys-352/Cys-362, Cys-369/Cys-411, and Cys-405/Cys-417. Residues 279 to 281 carry the D/ECD-tripeptide motif; the sequence is DCD. Ca(2+) contacts are provided by Asp-281, Glu-284, and Asp-296.

The protein belongs to the venom metalloproteinase (M12B) family. P-III subfamily. P-IIIa sub-subfamily. In terms of assembly, monomer. It depends on Zn(2+) as a cofactor. Glycosylated. Expressed by the venom gland.

It localises to the secreted. Its activity is regulated as follows. Its proteolytic activity is inhibited by EDTA, TPEN, 1,10-phenanthroline, and some thiol compounds, but is enhanced by alkaline earth metal ions (Mg2+, Ca2+, Sr2+, and Ba2+). Its activity is not modulated by urea (4 M). In terms of biological role, non-hemorrhagic metalloproteinase that degrades fibrinogen. The alpha chain (FGA) is rapidly degraded, the beta chain (FGB) is degraded very slowly, while the gamma chain is left intact. Shows a prefential cleavage at X-Leu bonds. Cleaves insulin B chain at '29-His-|-Leu-30', '33-Ser-|-His-34', '38-Ala-|-Leu-39' and '40-Tyr-|-Leu-41' bonds. The protein is Zinc metalloproteinase-disintegrin-like brevilysin H2b of Gloydius brevicauda (Korean slamosa snake).